Consider the following 218-residue polypeptide: MSETAPVAAPAVSAPGAKAAGKKPKKAAGGSKARKPAGPSVTELITKAVAASKERKGLSLAALKKALAAGGYDVEKNNSRIKLGLKSLVGKGTLVQTKGTGASGSFKLNKKPGETKEKATKKKPAAKPKKPAAKKPASAAKKPKKAAAVKKSPKKAKKPAAAATKKAAKSPKKAAKAGRPKKAAKSPAKAKAVKPKAAKPKAAKPKAAKAKKAAPKKK.

2 stretches are compositionally biased toward low complexity: residues M1–A19 and A27–P39. 2 disordered regions span residues M1–V41 and V89–K218. Position 2 is an N-acetylserine (S2). The H15 domain occupies A37–K110. Composition is skewed to basic residues over residues A119–A133, K141–K158, K166–A184, and K191–K218.

It belongs to the histone H1/H5 family.

The protein localises to the nucleus. It is found in the chromosome. In terms of biological role, histones H1 are necessary for the condensation of nucleosome chains into higher-order structures. The polypeptide is Histone H1 (Anas platyrhynchos (Mallard)).